The sequence spans 470 residues: Poly(A) polymerase catalytic subunit (470 aa).

Catalysis depends on residues aspartate 192 and aspartate 194.

Belongs to the poxviridae poly(A) polymerase catalytic subunit family. As to quaternary structure, heterodimer of a large (catalytic) subunit and a small (regulatory) subunit.

The catalysed reaction is RNA(n) + ATP = RNA(n)-3'-adenine ribonucleotide + diphosphate. Functionally, polymerase that creates the 3'-poly(A) tail of mRNA's. This chain is Poly(A) polymerase catalytic subunit (PAPL), found in Homo sapiens (Human).